We begin with the raw amino-acid sequence, 460 residues long: Dynactin subunit 4 (460 aa).

Ala-2 is subject to N-acetylalanine. Residues 152–172 (QQLAQKEKVERDRKKLARRRN) adopt a coiled-coil conformation. At Ser-196 the chain carries Phosphoserine. A Glycyl lysine isopeptide (Lys-Gly) (interchain with G-Cter in SUMO2) cross-link involves residue Lys-215. The residue at position 407 (Thr-407) is a Phosphothreonine.

Belongs to the dynactin subunit 4 family. Subunit of dynactin, a multiprotein complex part of a tripartite complex with dynein and a adapter, such as BICDL1, BICD2 or HOOK3. The dynactin complex is built around ACTR1A/ACTB filament and consists of an actin-related filament composed of a shoulder domain, a pointed end and a barbed end. Its length is defined by its flexible shoulder domain. The soulder is composed of 2 DCTN1 subunits, 4 DCTN2 and 2 DCTN3. The 4 DCNT2 (via N-terminus) bind the ACTR1A filament and act as molecular rulers to determine the length. The pointed end is important for binding dynein-dynactin cargo adapters. Consists of 4 subunits: ACTR10, DCNT4, DCTN5 and DCTN6. The barbed end is composed of a CAPZA1:CAPZB heterodimers, which binds ACTR1A/ACTB filament and dynactin and stabilizes dynactin. Interacts with ATP7B, but not ATP7A, in a copper-dependent manner. Interacts with ANK2; this interaction is required for localization at costameres. Interacts with N4BP2L1.

Its subcellular location is the cytoplasm. It localises to the cytoskeleton. It is found in the microtubule organizing center. The protein localises to the centrosome. The protein resides in the stress fiber. Its subcellular location is the cell cortex. It localises to the myofibril. It is found in the sarcomere. Its function is as follows. Part of the dynactin complex that activates the molecular motor dynein for ultra-processive transport along microtubules. This chain is Dynactin subunit 4 (DCTN4), found in Pongo abelii (Sumatran orangutan).